A 728-amino-acid polypeptide reads, in one-letter code: Catalase-peroxidase (728 aa).

The segment at residues 97 to 225 (WHSAGTYRIA…LAAVMMGLIY (129 aa)) is a cross-link (tryptophyl-tyrosyl-methioninium (Trp-Tyr) (with M-251)). The Proton acceptor role is filled by His98. The tryptophyl-tyrosyl-methioninium (Tyr-Met) (with W-97) cross-link spans 225–251 (YVNPEGVDGNPDPLRTAQDIRITFARM). Position 266 (His266) interacts with heme b.

Belongs to the peroxidase family. Peroxidase/catalase subfamily. In terms of assembly, homodimer or homotetramer. Heme b is required as a cofactor. In terms of processing, formation of the three residue Trp-Tyr-Met cross-link is important for the catalase, but not the peroxidase activity of the enzyme.

It catalyses the reaction H2O2 + AH2 = A + 2 H2O. The catalysed reaction is 2 H2O2 = O2 + 2 H2O. In terms of biological role, bifunctional enzyme with both catalase and broad-spectrum peroxidase activity. The polypeptide is Catalase-peroxidase (Shewanella putrefaciens (strain CN-32 / ATCC BAA-453)).